The following is a 264-amino-acid chain: 3-methyl-2-oxobutanoate hydroxymethyltransferase (264 aa).

Mg(2+)-binding residues include Asp45 and Asp84. Residues 45 to 46 (DS), Asp84, and Lys112 each bind 3-methyl-2-oxobutanoate. Glu114 is a binding site for Mg(2+). Glu181 (proton acceptor) is an active-site residue.

The protein belongs to the PanB family. In terms of assembly, homodecamer; pentamer of dimers. Mg(2+) is required as a cofactor.

Its subcellular location is the cytoplasm. It catalyses the reaction 3-methyl-2-oxobutanoate + (6R)-5,10-methylene-5,6,7,8-tetrahydrofolate + H2O = 2-dehydropantoate + (6S)-5,6,7,8-tetrahydrofolate. The protein operates within cofactor biosynthesis; (R)-pantothenate biosynthesis; (R)-pantoate from 3-methyl-2-oxobutanoate: step 1/2. Functionally, catalyzes the reversible reaction in which hydroxymethyl group from 5,10-methylenetetrahydrofolate is transferred onto alpha-ketoisovalerate to form ketopantoate. This chain is 3-methyl-2-oxobutanoate hydroxymethyltransferase, found in Escherichia coli O1:K1 / APEC.